A 98-amino-acid chain; its full sequence is Co-chaperonin GroES (98 aa).

The protein belongs to the GroES chaperonin family. In terms of assembly, heptamer of 7 subunits arranged in a ring. Interacts with the chaperonin GroEL.

The protein resides in the cytoplasm. Its function is as follows. Together with the chaperonin GroEL, plays an essential role in assisting protein folding. The GroEL-GroES system forms a nano-cage that allows encapsulation of the non-native substrate proteins and provides a physical environment optimized to promote and accelerate protein folding. GroES binds to the apical surface of the GroEL ring, thereby capping the opening of the GroEL channel. This is Co-chaperonin GroES from Neorickettsia sennetsu (strain ATCC VR-367 / Miyayama) (Ehrlichia sennetsu).